The chain runs to 297 residues: Adrenocorticotropic hormone receptor (297 aa).

The Extracellular segment spans residues 1-23; that stretch reads MKHIIHASGNVNGTARNNSDCPH. N-linked (GlcNAc...) asparagine glycosylation is found at Asn-12 and Asn-17. Cystine bridges form between Cys-21–Cys-253 and Cys-245–Cys-251. Residues 24–49 form a helical membrane-spanning segment; that stretch reads VALPEEIFFIISITGVLENLIIILAV. Residues 50–58 are Cytoplasmic-facing; that stretch reads IKNKNLQFP. The helical transmembrane segment at 59-79 threads the bilayer; sequence MYFFICSLAISDMLGSLYKIL. The Extracellular segment spans residues 80–104; it reads ESILIMFRNMGYFKPHGSFETTTDD. Residues 105–126 traverse the membrane as a helical segment; that stretch reads IIDTMFILSLLGSIFSLLAIAV. The Cytoplasmic portion of the chain corresponds to 127–147; the sequence is DRYITIFHALQYHSIVTMHRT. Residues 148–168 form a helical membrane-spanning segment; sequence IAVLSIIWTFCIGSGITMVLF. At 169–180 the chain is on the extracellular side; that stretch reads SHHVPTVLTFTS. A helical membrane pass occupies residues 181–199; it reads LFPLMLVFILCLYVHMFLM. Residues 200–217 are Cytoplasmic-facing; that stretch reads ARSHARNISTLPRGNMRG. A helical transmembrane segment spans residues 218–244; that stretch reads AITLTILLGVFIFCWAPFILHILLVTF. At 245-256 the chain is on the extracellular side; sequence CPNNPYCTCYIS. Residues 257-278 form a helical membrane-spanning segment; sequence LFHVNGMLIMCNAVIDPFIYAF. At 279 to 297 the chain is on the cytoplasmic side; the sequence is RSPELRSAFRRMISYSKCL. Cys-296 is lipidated: S-palmitoyl cysteine.

Belongs to the G-protein coupled receptor 1 family. In terms of assembly, homodimer. Interacts with corticotropin (ACTH). Interacts with MRAP; this interaction targets MC2R to the plasma membrane. Interacts with MRAP2; competing with MRAP for binding to MC2R and impairing the binding of corticotropin (ACTH). Ubiquitinated by MGRN1 that may be involved in post-endocytic trafficking and/or degradation of internalized receptor.

Its subcellular location is the cell membrane. Functionally, hormone receptor primarily expressed in adrenal cortex that plays a key role in regulating adrenocortical function. Upon corticotropin (ACTH) binding, facilitates the release of adrenal glucocorticoids, including cortisol and corticosterone. In addition, MC2R is required for fetal and neonatal adrenal gland development. Mechanistically, activates adenylate cyclase (cAMP), the MAPK cascade as well as the cAMP-dependent protein kinase A pathway leading to steroidogenic factor 1/NR5A1-mediated transcriptional activation. The protein is Adrenocorticotropic hormone receptor (MC2R) of Cavia porcellus (Guinea pig).